The chain runs to 222 residues: Probable glutathione-independent glyoxalase hsp3104 (222 aa).

Catalysis depends on residues Cys-124, His-125, and Glu-155.

This sequence belongs to the peptidase C56 family. HSP31-like subfamily.

Its subcellular location is the cytoplasm. The enzyme catalyses methylglyoxal + H2O = (R)-lactate + H(+). Functionally, catalyzes the conversion of methylglyoxal (MG) to D-lactate in a single glutathione (GSH)-independent step. May play a role in detoxifying endogenously produced glyoxals. Involved in protection against reactive oxygen species (ROS). The polypeptide is Probable glutathione-independent glyoxalase hsp3104 (Schizosaccharomyces pombe (strain 972 / ATCC 24843) (Fission yeast)).